The primary structure comprises 204 residues: Large ribosomal subunit protein bL25 (204 aa).

Belongs to the bacterial ribosomal protein bL25 family. CTC subfamily. Part of the 50S ribosomal subunit; part of the 5S rRNA/L5/L18/L25 subcomplex. Contacts the 5S rRNA. Binds to the 5S rRNA independently of L5 and L18.

Its function is as follows. This is one of the proteins that binds to the 5S RNA in the ribosome where it forms part of the central protuberance. This is Large ribosomal subunit protein bL25 from Wolbachia sp. subsp. Brugia malayi (strain TRS).